Reading from the N-terminus, the 870-residue chain is MQDKYTPADIERAAQQHWDKTGAARAVEDATKPKYYCLSMFPYPSGKLHMGHVRNYTIGDVLSRFHKMQGYNVLQPMGWDAFGMPAENAALQNNVPPAGWTYSNIDYMRQQLKSLGFAIDWEREFATCTPEYYRWEQWLFTRLYEKGLVYKKLGTVNWDPVDHTVLANEQVIDGRGWRSGALIEKREIPMYYMKITAYAEELLSELDNLPGWPEQVRLMQKNWIGKSTGVRFAFPLADNPDEKLWVFTTRADTIMGVTFVAVAAEHPLATKAAANNPELAAFIEECKKGGVAEADIATMEKKGMPTGIYVTHPLTGQQVEVWVGNYVLMSYGDGAVMAVPAHDERDFAFALKYNLPIKQVVAVDGETAFSHEAWAEWYADKAKGKLVNSGKYDGLGYEAAVDAIAADLAAKNLGDKKVQFRLRDWGISRQRYWGCPIPIIHCKTCGDVPVPDDQLPVVLPENVEITGAGSPLAKMPEFYECQCPKCGGDARRETDTMDTFFESSWYFLRYACPDNTTAMVDERVAYWCKGGIDQYIGGIEHAILHLLYSRFFTKLMRDVGLIGDLGEPFANLLTQGMVVAPTFYRELDGGKKQWINPADVDVVTDERGRPTGATLKTDGLPVVIGGTEKMSKSKNNGVDPQALIDQYGADTARLFIMFASPPDQSLEWSDAGVEGAYRFLRRLWKTTYDHLQAGLVAASTSNDGLSSAQADLRRKLHQTMGKVADDYGRRKQFNTAIAAVMELLNAYDKCDLKDAAGRALAQESLESIALLLFPIVPHIGQALYAQLRPGADAGNAAFPKADPAALKQDEIELMVQVNGKLRGAIRVSAEADKATIEATALANEDAIKFMEGKPAKKVIVVPGRLVNIVA.

Positions 42–52 (PYPSGKLHMGH) match the 'HIGH' region motif. The short motif at 629-633 (KMSKS) is the 'KMSKS' region element. Lys-632 lines the ATP pocket.

Belongs to the class-I aminoacyl-tRNA synthetase family.

It localises to the cytoplasm. The catalysed reaction is tRNA(Leu) + L-leucine + ATP = L-leucyl-tRNA(Leu) + AMP + diphosphate. The chain is Leucine--tRNA ligase from Dechloromonas aromatica (strain RCB).